Consider the following 338-residue polypeptide: Arginine N-succinyltransferase subunit alpha (338 aa).

It belongs to the succinylarginine dihydrolase family. In terms of assembly, heterotetramer of two alpha and two beta subunits.

The enzyme catalyses succinyl-CoA + L-arginine = N(2)-succinyl-L-arginine + CoA + H(+). The protein operates within amino-acid degradation; L-arginine degradation via AST pathway; L-glutamate and succinate from L-arginine: step 1/5. In terms of biological role, catalyzes the transfer of succinyl-CoA to arginine to produce N(2)-succinylarginine. Also acts on L-ornithine. This Pseudomonas aeruginosa (strain ATCC 15692 / DSM 22644 / CIP 104116 / JCM 14847 / LMG 12228 / 1C / PRS 101 / PAO1) protein is Arginine N-succinyltransferase subunit alpha (astA).